Here is a 76-residue protein sequence, read N- to C-terminus: Large ribosomal subunit protein uL29 (76 aa).

This sequence belongs to the universal ribosomal protein uL29 family.

The sequence is that of Large ribosomal subunit protein uL29 from Corynebacterium efficiens (strain DSM 44549 / YS-314 / AJ 12310 / JCM 11189 / NBRC 100395).